Reading from the N-terminus, the 336-residue chain is Dihydroorotate dehydrogenase (quinone) (336 aa).

Residues alanine 62–lysine 66 and threonine 86 each bind FMN. Lysine 66 contributes to the substrate binding site. Asparagine 111–phenylalanine 115 contacts substrate. Positions 139 and 172 each coordinate FMN. Asparagine 172 provides a ligand contact to substrate. Serine 175 serves as the catalytic Nucleophile. Asparagine 177 contacts substrate. FMN is bound by residues lysine 217 and threonine 245. Asparagine 246 to threonine 247 contributes to the substrate binding site. FMN is bound by residues glycine 268, glycine 297, and tyrosine 318–serine 319.

Belongs to the dihydroorotate dehydrogenase family. Type 2 subfamily. Monomer. The cofactor is FMN.

It localises to the cell membrane. The enzyme catalyses (S)-dihydroorotate + a quinone = orotate + a quinol. Its pathway is pyrimidine metabolism; UMP biosynthesis via de novo pathway; orotate from (S)-dihydroorotate (quinone route): step 1/1. In terms of biological role, catalyzes the conversion of dihydroorotate to orotate with quinone as electron acceptor. In Aliivibrio fischeri (strain MJ11) (Vibrio fischeri), this protein is Dihydroorotate dehydrogenase (quinone).